The primary structure comprises 727 residues: UvrABC system protein C (727 aa).

The GIY-YIG domain maps to valine 16–valine 95. The UVR domain maps to aspartate 208–alanine 243. Disordered regions lie at residues aspartate 503–arginine 527 and serine 679–glutamate 727. The span at asparagine 701–glutamate 711 shows a compositional bias: basic and acidic residues. Polar residues predominate over residues glutamine 718 to glutamate 727.

Belongs to the UvrC family. As to quaternary structure, interacts with UvrB in an incision complex.

The protein localises to the cytoplasm. The UvrABC repair system catalyzes the recognition and processing of DNA lesions. UvrC both incises the 5' and 3' sides of the lesion. The N-terminal half is responsible for the 3' incision and the C-terminal half is responsible for the 5' incision. The sequence is that of UvrABC system protein C from Rhodococcus jostii (strain RHA1).